Reading from the N-terminus, the 620-residue chain is Membrane protein insertase YidC (620 aa).

The chain crosses the membrane as a helical span at residues N7–M27. Positions A37–A58 are enriched in low complexity. The tract at residues A37–D77 is disordered. 4 consecutive transmembrane segments (helical) span residues F399 to S419, W469 to I489, L514 to I534, and W560 to W580.

It belongs to the OXA1/ALB3/YidC family. Type 1 subfamily. Interacts with the Sec translocase complex via SecD. Specifically interacts with transmembrane segments of nascent integral membrane proteins during membrane integration.

The protein localises to the cell inner membrane. Functionally, required for the insertion and/or proper folding and/or complex formation of integral membrane proteins into the membrane. Involved in integration of membrane proteins that insert both dependently and independently of the Sec translocase complex, as well as at least some lipoproteins. Aids folding of multispanning membrane proteins. This chain is Membrane protein insertase YidC, found in Allorhizobium ampelinum (strain ATCC BAA-846 / DSM 112012 / S4) (Agrobacterium vitis (strain S4)).